A 223-amino-acid polypeptide reads, in one-letter code: Ribonuclease T (223 aa).

In terms of domain architecture, Exonuclease spans 20-194 (VVIDVETAGF…YDTERTAELF (175 aa)). Residues D23, E25, H181, and D186 each contribute to the Mg(2+) site. H181 functions as the Proton donor/acceptor in the catalytic mechanism.

The protein belongs to the RNase T family. In terms of assembly, homodimer. Mg(2+) serves as cofactor.

Its function is as follows. Trims short 3' overhangs of a variety of RNA species, leaving a one or two nucleotide 3' overhang. Responsible for the end-turnover of tRNA: specifically removes the terminal AMP residue from uncharged tRNA (tRNA-C-C-A). Also appears to be involved in tRNA biosynthesis. The sequence is that of Ribonuclease T from Shewanella baltica (strain OS185).